A 2121-amino-acid chain; its full sequence is PAM2 domain-containing protein UPA2 (2121 aa).

The PAM2 1 signature appears at 1 to 17 (MEGSSLNVAAPVFKPSG). 6 disordered regions span residues 14–46 (KPSG…AVHA), 262–302 (QPED…SALT), 375–397 (AATT…PPST), 475–507 (ARRR…SSGG), 522–543 (ANSD…QKPL), and 586–819 (DLGR…QFSR). The interval 339-599 (PWPYSLGLPD…GFGYEPQSPN (261 aa)) is effector domain. A compositionally biased stretch (polar residues) spans 596–607 (QSPNAAPNGTTS). Acidic residues-rich tracts occupy residues 626 to 637 (EENDELGFDGEE) and 646 to 658 (EDAD…EEPN). The span at 679 to 689 (DGHDRYADDNQ) shows a compositional bias: basic and acidic residues. The span at 690–712 (SHASNDDSLQDSLTPSDEQFSNP) shows a compositional bias: polar residues. Basic and acidic residues predominate over residues 719–735 (REERILRRQHRAAERAA). Residues 736–745 (RRERKQRQRG) show a composition bias toward basic residues. 2 stretches are compositionally biased toward polar residues: residues 749-758 (SDNTLPSSSI) and 777-788 (NPRNGNTISNPS). 2 short sequence motifs (PAM2) span residues 858–874 (SGIS…KFGG) and 920–937 (TNAA…PGLF). Positions 950–960 (NSLSASPSIAV) are enriched in polar residues. Residues 950–1012 (NSLSASPSIA…PSPPRPKASA (63 aa)) form a disordered region. Basic and acidic residues predominate over residues 966–981 (GADHRETENRDMQGRE). A PAM2 4 motif is present at residues 1046-1063 (SHESRLTADAPSFVPTWA). Disordered regions lie at residues 1076-1096 (KRPS…KDLP), 1119-1261 (SKDD…EEES), and 1337-1369 (SHAR…NSSL). Residues 1198–1207 (HSPSISQTSD) are compositionally biased toward polar residues. The span at 1248-1261 (GGNDEDDYEDEEES) shows a compositional bias: acidic residues. The span at 1345 to 1369 (ETQSTIRPLRQRNSSSDVKTANSSL) shows a compositional bias: polar residues. Residues 1783–2054 (LEKQAQANAD…EAKLQTLTAS (272 aa)) are a coiled coil. Residues 2099–2121 (SFASTAGSQGKKEVEVDEGGWWS) form a disordered region. A GWW motif is present at residues 2118-2120 (GWW).

Belongs to the UPA1 PAM2 domain-binding protein family. In terms of assembly, might form homodimers via its C-terminal coiled-coil domain. Part of large ribonucleoprotein complexes (mRNPs) containing RNA-binding proteins RRM4 and PAB1, endosome-binding protein UPA1, core scaffold protein UPA2 and associated factor GRP1. Interacts (via PAM2 motifs) with PAB1.

The protein resides in the cytoplasm. The protein localises to the cytoskeleton. It localises to the endosome. Functionally, core component of endosomal mRNA transport and appears to carry out crucial scaffolding functions. The endosomal mRNA transport regulates polarity of the infectious hyphae by transporting a broad spectrum of cargo mRNAs from the nucleus to cell poles. This chain is PAM2 domain-containing protein UPA2, found in Mycosarcoma maydis (Corn smut fungus).